A 271-amino-acid polypeptide reads, in one-letter code: 4-hydroxy-tetrahydrodipicolinate reductase (271 aa).

NAD(+) contacts are provided by residues 11 to 16 and E37; that span reads GGSGRM. R38 contributes to the NADP(+) binding site. Residues 101–103 and 125–128 each bind NAD(+); these read GTT and APNM. Catalysis depends on H158, which acts as the Proton donor/acceptor. H159 lines the (S)-2,3,4,5-tetrahydrodipicolinate pocket. K162 (proton donor) is an active-site residue. 168-169 provides a ligand contact to (S)-2,3,4,5-tetrahydrodipicolinate; that stretch reads GT.

It belongs to the DapB family.

It is found in the cytoplasm. The catalysed reaction is (S)-2,3,4,5-tetrahydrodipicolinate + NAD(+) + H2O = (2S,4S)-4-hydroxy-2,3,4,5-tetrahydrodipicolinate + NADH + H(+). It catalyses the reaction (S)-2,3,4,5-tetrahydrodipicolinate + NADP(+) + H2O = (2S,4S)-4-hydroxy-2,3,4,5-tetrahydrodipicolinate + NADPH + H(+). Its pathway is amino-acid biosynthesis; L-lysine biosynthesis via DAP pathway; (S)-tetrahydrodipicolinate from L-aspartate: step 4/4. Functionally, catalyzes the conversion of 4-hydroxy-tetrahydrodipicolinate (HTPA) to tetrahydrodipicolinate. The chain is 4-hydroxy-tetrahydrodipicolinate reductase from Shewanella piezotolerans (strain WP3 / JCM 13877).